Consider the following 416-residue polypeptide: Proline-serine-threonine phosphatase-interacting protein 1 (416 aa).

An F-BAR domain is found at 5 to 264 (LQFKDAFWCR…TLEGCSIDAD (260 aa)). The stretch at 166 to 212 (HQKQVEKSQNKARQCKDSATEAERVYRQSIAQLEKVRAEWEQEHRTT) forms a coiled coil. Ser-318 carries the post-translational modification Phosphoserine. A Phosphotyrosine modification is found at Tyr-345. The SH3 domain maps to 359–416 (SPAQEYRALYDYTAQNPDELDLSAGDILEVILEGEDGWWTVERNGQRGFVPGSYLEKL).

As to quaternary structure, homodimer. Homotrimer. Interacts (via coiled-coil domain) with CD2AP, PTPN12 and PTPN18. Interacts (via SH3 domain) with ABL1 and WAS. Interacts (via SH3 and coiled-coil domains) with MEFV (via B-box zinc finger); the interaction allows binding of MEFV to PYCARD and facilitates formation of PYCARD pyroptosomes. Interacts with CD2, DNM2 and FASLG. In terms of processing, dephosphorylated on Tyr-345 by PTPN18, this event negatively regulates the association of PSTPIP1 with SH2 domain-containing proteins as tyrosine kinase. Phosphorylation of Tyr-345 is probably required for subsequent phosphorylation at other tyrosine residues. Phosphorylation is induced by activation of the EGFR and PDGFR in a ABL1 dependent manner. The phosphorylation regulates the interaction with WAS and with MEFV. In terms of tissue distribution, highly expressed in the peripheral blood leukocytes, granulocytes and monocytes, namely in T-cells and natural killer cells, and in spleen. Weakly expressed in the thymus, small intestine, lung and placenta.

Its subcellular location is the cytoplasm. It is found in the cell membrane. The protein localises to the cell projection. It localises to the uropodium. The protein resides in the cytoskeleton. Its subcellular location is the perinuclear region. It is found in the lamellipodium. The protein localises to the cleavage furrow. In terms of biological role, involved in regulation of the actin cytoskeleton. May regulate WAS actin-bundling activity. Bridges the interaction between ABL1 and PTPN18 leading to ABL1 dephosphorylation. May play a role as a scaffold protein between PTPN12 and WAS and allow PTPN12 to dephosphorylate WAS. Has the potential to physically couple CD2 and CD2AP to WAS. Acts downstream of CD2 and CD2AP to recruit WAS to the T-cell:APC contact site so as to promote the actin polymerization required for synapse induction during T-cell activation. Down-regulates CD2-stimulated adhesion through the coupling of PTPN12 to CD2. Also has a role in innate immunity and the inflammatory response. Recruited to inflammasomes by MEFV. Induces formation of pyroptosomes, large supramolecular structures composed of oligomerized PYCARD dimers which form prior to inflammatory apoptosis. Binding to MEFV allows MEFV to bind to PYCARD and facilitates pyroptosome formation. Regulates endocytosis and cell migration in neutrophils. The sequence is that of Proline-serine-threonine phosphatase-interacting protein 1 (PSTPIP1) from Homo sapiens (Human).